The sequence spans 443 residues: ATP-dependent protease ATPase subunit HslU (443 aa).

ATP is bound by residues I18, 60–65 (GVGKTE), D256, E321, and R393.

The protein belongs to the ClpX chaperone family. HslU subfamily. A double ring-shaped homohexamer of HslV is capped on each side by a ring-shaped HslU homohexamer. The assembly of the HslU/HslV complex is dependent on binding of ATP.

The protein localises to the cytoplasm. In terms of biological role, ATPase subunit of a proteasome-like degradation complex; this subunit has chaperone activity. The binding of ATP and its subsequent hydrolysis by HslU are essential for unfolding of protein substrates subsequently hydrolyzed by HslV. HslU recognizes the N-terminal part of its protein substrates and unfolds these before they are guided to HslV for hydrolysis. The sequence is that of ATP-dependent protease ATPase subunit HslU from Escherichia coli O139:H28 (strain E24377A / ETEC).